The sequence spans 232 residues: Large ribosomal subunit protein uL1 (232 aa).

This sequence belongs to the universal ribosomal protein uL1 family. In terms of assembly, part of the 50S ribosomal subunit.

Its function is as follows. Binds directly to 23S rRNA. The L1 stalk is quite mobile in the ribosome, and is involved in E site tRNA release. Functionally, protein L1 is also a translational repressor protein, it controls the translation of the L11 operon by binding to its mRNA. This Burkholderia multivorans (strain ATCC 17616 / 249) protein is Large ribosomal subunit protein uL1.